Reading from the N-terminus, the 528-residue chain is Zinc finger protein 16-like (528 aa).

The segment at 1 to 28 (MSRKRNHCYMETGASSESQGAFVDSAGP) is disordered. A coiled-coil region spans residues 79–106 (IRVLKMELREKSDEIELLKAKLESAEKD). Disordered stretches follow at residues 159-202 (GAAE…TDAE) and 232-293 (FKGD…DRME). Residues 232–242 (FKGDSETKCED) show a composition bias toward basic and acidic residues. Positions 244–256 (PPMDEEDENEDSE) are enriched in acidic residues. 2 stretches are compositionally biased toward basic and acidic residues: residues 257–270 (EGRGSLRSVSDHFP) and 278–293 (GEDRSSPAEDSMDRME). A C2H2-type 1 zinc finger spans residues 303 to 326 (FICPFCGTLCPDSSFLEEHIKLMH). Over residues 333–345 (QSTSAGSSSQAEG) the composition is skewed to low complexity. A disordered region spans residues 333 to 359 (QSTSAGSSSQAEGDSGEAGPASRGARE). 4 C2H2-type zinc fingers span residues 366 to 388 (YECGDCGRHFNYLGNLRQHQRIH), 394 to 416 (FVCPECGERFRHTARLKSHRLSH), 423 to 445 (FPCPQCGKGFPVLSGLKRHQRVH), and 451 to 473 (YACPQCGRRFKELGNLYTHMRIH). A C2H2-type 6; degenerate zinc finger spans residues 479-501 (YTCYQCGRSFRHLGTYKSHRCMP). The segment at 502 to 528 (ATQMPSEHSPPWAQEDKVQTGRLQGYV) is disordered.

This sequence belongs to the krueppel C2H2-type zinc-finger protein family.

It localises to the nucleus. Functionally, probable transcription factor. Important for development and migration of oligodendrocyte precursor cells, and normal myelination of axons in the central nervous system (CNS). Functions autonomously in oligodendrocytes to promote CNS myelination. Seems to act in parallel with notch3 during oligodendrocyte development. The protein is Zinc finger protein 16-like of Danio rerio (Zebrafish).